The primary structure comprises 231 residues: Chromosome partition protein MukE (231 aa).

The segment at 211 to 231 (SLLADEEEQDYNEQAELEGEA) is disordered. Positions 214 to 231 (ADEEEQDYNEQAELEGEA) are enriched in acidic residues.

This sequence belongs to the MukE family. In terms of assembly, interacts, and probably forms a ternary complex, with MukF and MukB. The complex formation is stimulated by calcium or magnesium.

It localises to the cytoplasm. The protein localises to the nucleoid. Functionally, involved in chromosome condensation, segregation and cell cycle progression. May participate in facilitating chromosome segregation by condensation DNA from both sides of a centrally located replisome during cell division. Probably acts via its interaction with MukB and MukF. The polypeptide is Chromosome partition protein MukE (Vibrio vulnificus (strain CMCP6)).